Consider the following 262-residue polypeptide: MDGCGTYLDTMRREAPLVQCITNFVAMNVVANVLLAAGASPAMVHDAEESGEFAAIAQALTINMGTPSPRWVEGMEAAARGAAAAGRPWVLDPVAVGATAFRRGLGARLLALKPTVIRGNASEILALAGAETRGKGADSADPVAAAEAAAQRLAESSGAVVAVTGPVDFVTDGRRGIRCANGHPLMPRVTALGCSLTGIVGAFAAIRPPFEATAAALAFFGLAGEEAAKTATGPGSFQVAFLDALHALSPEALDRGARLEAA.

Methionine 43 provides a ligand contact to substrate. The ATP site is built by arginine 118 and threonine 164. Position 191 (alanine 191) interacts with substrate.

The protein belongs to the Thz kinase family. Mg(2+) serves as cofactor.

It catalyses the reaction 5-(2-hydroxyethyl)-4-methylthiazole + ATP = 4-methyl-5-(2-phosphooxyethyl)-thiazole + ADP + H(+). Its pathway is cofactor biosynthesis; thiamine diphosphate biosynthesis; 4-methyl-5-(2-phosphoethyl)-thiazole from 5-(2-hydroxyethyl)-4-methylthiazole: step 1/1. Catalyzes the phosphorylation of the hydroxyl group of 4-methyl-5-beta-hydroxyethylthiazole (THZ). This chain is Hydroxyethylthiazole kinase, found in Cereibacter sphaeroides (strain ATCC 17029 / ATH 2.4.9) (Rhodobacter sphaeroides).